The chain runs to 349 residues: Isopentenyl-diphosphate delta-isomerase (349 aa).

Residue Arg-9 to Lys-10 participates in substrate binding. FMN contacts are provided by residues Ala-65–Thr-67, Ser-95, and Asn-124. Position 95 to 97 (Ser-95 to His-97) interacts with substrate. Gln-154 is a binding site for substrate. Residue Glu-155 participates in Mg(2+) binding. Residues Lys-186, Ser-211, Thr-216, Gly-262 to Arg-264, and Ser-283 to Arg-284 contribute to the FMN site.

Belongs to the IPP isomerase type 2 family. Homooctamer. Dimer of tetramers. FMN serves as cofactor. It depends on NADPH as a cofactor. Mg(2+) is required as a cofactor.

It localises to the cytoplasm. It carries out the reaction isopentenyl diphosphate = dimethylallyl diphosphate. In terms of biological role, involved in the biosynthesis of isoprenoids. Catalyzes the 1,3-allylic rearrangement of the homoallylic substrate isopentenyl (IPP) to its allylic isomer, dimethylallyl diphosphate (DMAPP). This chain is Isopentenyl-diphosphate delta-isomerase, found in Staphylococcus aureus.